Here is a 322-residue protein sequence, read N- to C-terminus: GRB2-related adaptor protein 2 (322 aa).

One can recognise an SH3 1 domain in the interval 1 to 56; that stretch reads MEATAKFDFMASGEDELSFRTGDILKILSNQEEWLKAELGSQEGYVPKNFIDIEFP. Phosphotyrosine is present on Y45. The 92-residue stretch at 58–149 folds into the SH2 domain; it reads WFHEGLSRHQ…QKQVFLRDGT (92 aa). K106 carries the post-translational modification N6-acetyllysine. Residues 143-216 form a disordered region; it reads VFLRDGTQDQ…TPGPQPPQQQ (74 aa). Over residues 148-163 the composition is skewed to basic and acidic residues; the sequence is GTQDQGHRGNSLDRRS. S186 carries the phosphoserine modification. The segment covering 193–204 has biased composition (low complexity); sequence PQQFHPHQQPSP. Phosphoserine is present on S230. At T254 the chain carries Phosphothreonine. One can recognise an SH3 2 domain in the interval 263 to 322; that stretch reads GRVRWARALYDFEALEEDELGFRSGEVVEVLDSSNPSWWTGRLHNKLGLFPANYVAPMMR.

This sequence belongs to the GRB2/sem-5/DRK family. In terms of assembly, interacts with phosphorylated LAT and LAX1 upon TCR activation. Interacts with SHB. Interacts with PTPN23. Interacts with phosphorylated LIME1 upon TCR activation.

Its subcellular location is the nucleus. It is found in the cytoplasm. The protein localises to the endosome. In terms of biological role, interacts with SLP-76 to regulate NF-AT activation. Binds to tyrosine-phosphorylated shc. The polypeptide is GRB2-related adaptor protein 2 (Grap2) (Mus musculus (Mouse)).